Here is a 512-residue protein sequence, read N- to C-terminus: RCC1 domain-containing protein DDB_G0279253 (512 aa).

8 RCC1 repeats span residues 1 to 56 (MKIY…MIID), 58 to 134 (GDLY…ACDN), 135 to 185 (NGNI…NNNN), 197 to 248 (SGGV…ALSS), 249 to 319 (ENDV…LLDI), 321 to 384 (FKNV…LLTN), 386 to 443 (DKLY…IQVY), and 454 to 512 (NNNI…FILP). Over residues 66–77 (NDSGQLGINSNE) the composition is skewed to polar residues. Disordered regions lie at residues 66–85 (NDSG…QQQQ) and 162–200 (STSN…SGGV). The segment covering 162–196 (STSNNKNNNNNNNNNNNNNNNNNNNNNNNNNNNNN) has biased composition (low complexity).

The chain is RCC1 domain-containing protein DDB_G0279253 from Dictyostelium discoideum (Social amoeba).